Here is a 106-residue protein sequence, read N- to C-terminus: Cell division protein FtsL (106 aa).

Residues 1–22 (MPRQSPPNLAKLIALDLLTVGR) lie on the Cytoplasmic side of the membrane. The chain crosses the membrane as a helical span at residues 23–43 (VPLLLLVLIFSCAMGVVFMTH). Residues 44 to 106 (HTRQAISAKD…SDKEVVINLK (63 aa)) lie on the Periplasmic side of the membrane.

This sequence belongs to the FtsL family. As to quaternary structure, part of a complex composed of FtsB, FtsL and FtsQ.

It localises to the cell inner membrane. Essential cell division protein. May link together the upstream cell division proteins, which are predominantly cytoplasmic, with the downstream cell division proteins, which are predominantly periplasmic. This chain is Cell division protein FtsL, found in Vibrio cholerae serotype O1 (strain ATCC 39315 / El Tor Inaba N16961).